The following is a 154-amino-acid chain: Leghemoglobin-2 (154 aa).

Positions 3–151 (ALTESQAALV…LAIVIKKEMN (149 aa)) constitute a Globin domain. Position 46 (S46) interacts with heme b. Position 46 is a phosphoserine (S46). An O2-binding site is contributed by H64. 3 residues coordinate heme b: K67, H98, and K101. Nitrated tyrosine is present on Y139.

Belongs to the plant globin family. Monomer. Nitrated in effective nodules and particularly in hypoxic conditions; this mechanism may play a protective role in the symbiosis by buffering toxic peroxynitrite NO(2)(-). Nitration level decrease during nodule senescence. In terms of processing, phosphorylation at Ser-46 disrupts the molecular environment of its porphyrin ring oxygen binding pocket, thus leading to a reduced oxygen consumption and to the delivery of oxygen O(2) to symbiosomes. In terms of tissue distribution, root nodules.

The protein resides in the cytoplasm. The protein localises to the cytosol. Its subcellular location is the nucleus. Functionally, leghemoglobin that reversibly binds oxygen O(2) through a pentacoordinated heme iron. In root nodules, facilitates the diffusion of oxygen to the bacteroids while preventing the bacterial nitrogenase from being inactivated by buffering dioxygen, nitric oxide and carbon monoxide, and promoting the formation of reactive oxygen species (ROS, e.g. H(2)O(2)). This role is essential for symbiotic nitrogen fixation (SNF). This chain is Leghemoglobin-2, found in Lupinus luteus (European yellow lupine).